A 1300-amino-acid chain; its full sequence is uncharacterized protein (1300 aa).

A signal peptide spans 1–26 (MGYKLKRWPLVAFTFTGIGLGVVLAA). Residue C27 is the site of N-palmitoyl cysteine attachment. C27 carries S-diacylglycerol cysteine lipidation. The span at 464–478 (AMAAASTGADSSSGT) shows a compositional bias: low complexity. 4 disordered regions span residues 464 to 487 (AMAA…SGGN), 620 to 639 (ASVS…DTQE), 774 to 797 (DSQK…NDKK), and 1244 to 1269 (KMSD…SPRT). 2 stretches are compositionally biased toward polar residues: residues 620-637 (ASVS…STDT) and 774-783 (DSQKSTNTVK). Over residues 785-797 (PDIKPTRENNDKK) the composition is skewed to basic and acidic residues. Over residues 1257–1269 (TIRKPKPHHSPRT) the composition is skewed to basic residues.

This sequence belongs to the MG307/MG309/MG338 family.

Its subcellular location is the cell membrane. This is an uncharacterized protein from Mycoplasma pneumoniae (strain ATCC 29342 / M129 / Subtype 1) (Mycoplasmoides pneumoniae).